The sequence spans 596 residues: ATP-dependent RNA helicase dbp3 (596 aa).

A compositionally biased stretch (basic and acidic residues) spans 1–17 (MPKRTLEDTELNPRDNY). Disordered regions lie at residues 1–87 (MPKR…ESTS) and 115–139 (EEKV…QNGT). The span at 21–30 (SSKKSRKEKR) shows a compositional bias: basic residues. Residues 47 to 120 (IDIEVESKEA…KEGKEEKVDI (74 aa)) adopt a coiled-coil conformation. Residues 123-139 (STDSATPISVAPQQNGT) are compositionally biased toward polar residues. The short motif at 180–207 (IKFDYLPITDSAQRAPFKDFKAPTPIQA) is the Q motif element. Residues 210 to 386 (WPFLLAGRDV…STFMTSPVKI (177 aa)) form the Helicase ATP-binding domain. Residue 223 to 230 (AETGSGKT) participates in ATP binding. The DEAD box signature appears at 332–335 (DEAD). One can recognise a Helicase C-terminal domain in the interval 417-566 (RLMQLLKQYQ…PVPDELLKFG (150 aa)).

This sequence belongs to the DEAD box helicase family. DDX5/DBP2 subfamily.

It is found in the nucleus. Its subcellular location is the nucleolus. It carries out the reaction ATP + H2O = ADP + phosphate + H(+). Its function is as follows. ATP-dependent RNA helicase required for 60S ribosomal subunit synthesis. Involved in efficient pre-rRNA processing, predominantly at site A3, which is necessary for the normal formation of 25S and 5.8S rRNAs. The chain is ATP-dependent RNA helicase dbp3 (dbp3) from Sclerotinia sclerotiorum (strain ATCC 18683 / 1980 / Ss-1) (White mold).